A 734-amino-acid polypeptide reads, in one-letter code: DNA replication licensing factor MCM5 (734 aa).

Position 2 is an N-acetylserine (Ser2). Positions 331–537 (IYELISKSIA…RDVMLAKHVI (207 aa)) constitute an MCM domain. An ADP-binding site is contributed by Arg371. An N6-acetyllysine mark is found at Lys392 and Lys396. The Arginine finger motif lies at 512–515 (SRFD). The residue at position 605 (Ser605) is a Phosphoserine.

It belongs to the MCM family. Component of the MCM2-7 complex. The complex forms a toroidal hexameric ring with the proposed subunit order MCM2-MCM6-MCM4-MCM7-MCM3-MCM5. Component of the CMG helicase complex, a hexameric ring of related MCM2-7 subunits stabilized by CDC45 and the tetrameric GINS complex. Interacts with ANKRD17. Interacts with MCMBP. Interacts with TONSL; the interaction is direct.

The protein resides in the nucleus. Its subcellular location is the chromosome. The protein localises to the cytoplasm. It localises to the cytosol. It carries out the reaction ATP + H2O = ADP + phosphate + H(+). In terms of biological role, acts as a component of the MCM2-7 complex (MCM complex) which is the replicative helicase essential for 'once per cell cycle' DNA replication initiation and elongation in eukaryotic cells. Core component of CDC45-MCM-GINS (CMG) helicase, the molecular machine that unwinds template DNA during replication, and around which the replisome is built. The active ATPase sites in the MCM2-7 ring are formed through the interaction surfaces of two neighboring subunits such that a critical structure of a conserved arginine finger motif is provided in trans relative to the ATP-binding site of the Walker A box of the adjacent subunit. The six ATPase active sites, however, are likely to contribute differentially to the complex helicase activity. This Bos taurus (Bovine) protein is DNA replication licensing factor MCM5.